Consider the following 67-residue polypeptide: Major cold shock protein (67 aa).

Residues 4–63 (GTVKWFNAEKGFGFISTENGQDVFAHFSAIQTSGFKTLEEGQKVAFDVEEGQRGPQAVNI) enclose the CSD domain.

In terms of assembly, homodimer.

It localises to the cytoplasm. This is Major cold shock protein (cspA) from Streptococcus pyogenes serotype M6 (strain ATCC BAA-946 / MGAS10394).